The following is a 30-amino-acid chain: Brevinin-2Ej (30 aa).

Cys24 and Cys30 form a disulfide bridge.

In terms of tissue distribution, expressed by the skin glands.

The protein resides in the secreted. Functionally, shows antibacterial activity against representative Gram-negative and Gram-positive bacterial species, and hemolytic activity. This chain is Brevinin-2Ej, found in Pelophylax ridibundus (Marsh frog).